Consider the following 133-residue polypeptide: ATP synthase epsilon chain, chloroplastic (133 aa).

Belongs to the ATPase epsilon chain family. F-type ATPases have 2 components, CF(1) - the catalytic core - and CF(0) - the membrane proton channel. CF(1) has five subunits: alpha(3), beta(3), gamma(1), delta(1), epsilon(1). CF(0) has three main subunits: a, b and c.

It localises to the plastid. It is found in the chloroplast thylakoid membrane. Functionally, produces ATP from ADP in the presence of a proton gradient across the membrane. The protein is ATP synthase epsilon chain, chloroplastic of Zygnema circumcarinatum (Green alga).